We begin with the raw amino-acid sequence, 110 residues long: BolA-like protein 3 (110 aa).

Belongs to the BolA/IbaG family. In terms of assembly, interacts with NFU1.

It localises to the mitochondrion. Its function is as follows. Acts as a mitochondrial iron-sulfur (Fe-S) cluster assembly factor that facilitates (Fe-S) cluster insertion into a subset of mitochondrial proteins. Probably acts together with NFU1. In Bos taurus (Bovine), this protein is BolA-like protein 3 (BOLA3).